Here is a 406-residue protein sequence, read N- to C-terminus: MTAPADSTEKSETSETTTLQTTEVSTVDVDPDLPRVLAKVPGTVWVVAFIAAAERFTYWGITTPWQLHAKPPQASEFARCIRPRRSESIHDIQCLHVFLLFNTNSFRDNLGRLSRSLSDIAPEFDKRFRKLPPTGNILPKAGSVLSCAIRGRFQLDAAMPSYQREHFAKEVSWDETFVNEIRRGLVACRVILGFILFFTCLSQASNNLISQAGQMKTYGIPNDTITAMNPIFCVIMGPVIQKGLYPLLNKNNVKFQSITRMATGFIMMSASMAFAAGVQKIIYDTGPCYDRPLTCPGAENGRIPNQVNVFLQTPTYIILAVAEIFSFVTLSEYTYTKAPTDMKAVVQALGQLGAAAGSAIGIAITPLAHDPSLIWMYTGLAVAMFLVAVVFWILFKKYNAIDREDK.

Residues 1 to 25 (MTAPADSTEKSETSETTTLQTTEVS) are disordered. A compositionally biased stretch (low complexity) spans 14-25 (SETTTLQTTEVS). The next 6 membrane-spanning stretches (helical) occupy residues 184–204 (GLVACRVILGFILFFTCLSQA), 220–240 (IPNDTITAMNPIFCVIMGPVI), 262–282 (ATGFIMMSASMAFAAGVQKII), 309–329 (VFLQTPTYIILAVAEIFSFVT), 344–364 (AVVQALGQLGAAAGSAIGIAI), and 373–393 (LIWMYTGLAVAMFLVAVVFWI).

Belongs to the major facilitator superfamily. Proton-dependent oligopeptide transporter (POT/PTR) (TC 2.A.17) family.

It is found in the membrane. Functionally, peptide transporter; part of the gene cluster that mediates the biosynthesis of imizoquins A to D, tripeptide-derived alkaloids that serve a protective role against oxidative stress that are essential for normal germination. This is Peptide transporter imqD from Aspergillus flavus (strain ATCC 200026 / FGSC A1120 / IAM 13836 / NRRL 3357 / JCM 12722 / SRRC 167).